We begin with the raw amino-acid sequence, 395 residues long: ATP phosphoribosyltransferase regulatory subunit (395 aa).

The protein belongs to the class-II aminoacyl-tRNA synthetase family. HisZ subfamily. As to quaternary structure, heteromultimer composed of HisG and HisZ subunits.

It is found in the cytoplasm. It functions in the pathway amino-acid biosynthesis; L-histidine biosynthesis; L-histidine from 5-phospho-alpha-D-ribose 1-diphosphate: step 1/9. Its function is as follows. Required for the first step of histidine biosynthesis. May allow the feedback regulation of ATP phosphoribosyltransferase activity by histidine. The polypeptide is ATP phosphoribosyltransferase regulatory subunit (Pseudomonas fluorescens (strain Pf0-1)).